We begin with the raw amino-acid sequence, 625 residues long: MSDDETLADVRIVLIGDEGCGKTSLVMSLLEDEWVDAVPRRLDRVLIPADVTPENVTTSIVDLSIKEEDENWIVSEIRQANVICVVYSVTDESTVDGIQTKWLPLIRQSFGEYHETPVILVGNKSDGTANNTDKILPIMEANTEVETCVECSARTMKNVSEIFYYAQKAVIYPTRPLYDADTKQLTDRARKALIRVFKICDRDNDGYLSDTELNDFQKLCFGIPLTSTALEDVKRAVSDGCPDGVANDSLMLAGFLYLHLLFIERGRHETTWAVLRKFGYETSLKLSEDYLYPRITIPVGCSTELSPEGVQFVSALFEKYDEDKDGCLSPSELQNLFSVCPVPVITKDNILALETNQRGWLTYNGYMAYWNMTTLINLTQTFEQLAYLGFPVGRSGPGRAGNTLDSIRVTRERKKDLENHGTDRKVFQCLVVGAKDAGKTVFMQSLAGRGMADVAQIGRRHSPFVINRVRVKEESKYLLLREVDVLSPQDALGSGETSADVVAFLYDISNPDSFAFCATVYQKYFYRTKTPCVMIATKVEREEVDQRWEVPPEEFCRQFELPKPIKFSTGNIGQSSSPIFEQLAMMAVYPHLRRVFYLNDSNLLSKITFGAAIVALAGFLVLKNL.

Residues 1-601 (MSDDETLADV…LRRVFYLNDS (601 aa)) are Cytoplasmic-facing. Residues 3–170 (DDETLADVRI…EIFYYAQKAV (168 aa)) enclose the Miro 1 domain. Residues 16-23 (GDEGCGKT), 62-66 (DLSIK), and 123-126 (NKSD) contribute to the GTP site. EF-hand domains follow at residues 188–223 (RARKALIRVFKICDRDNDGYLSDTELNDFQKLCFGI) and 308–343 (EGVQFVSALFEKYDEDKDGCLSPSELQNLFSVCPVP). Ca(2+) contacts are provided by Asp201, Asp203, Asp205, Tyr207, Glu212, Asp321, Asp323, Asp325, Cys327, and Glu332. Residues 420-625 (HGTDRKVFQC…LAGFLVLKNL (206 aa)) enclose the Miro 2 domain. GTP contacts are provided by residues 433–440 (GAKDAGKT), 470–474 (RVKEE), and 537–540 (TKVE). A helical; Anchor for type IV membrane protein membrane pass occupies residues 602-622 (NLLSKITFGAAIVALAGFLVL). Topologically, residues 623-625 (KNL) are mitochondrial intermembrane.

Belongs to the mitochondrial Rho GTPase family.

It localises to the mitochondrion outer membrane. Its function is as follows. Mitochondrial GTPase involved in mitochondrial trafficking. Probably involved in control of anterograde transport of mitochondria and their subcellular distribution. Plays a role in maintaining mitochondrial morphology. The sequence is that of Mitochondrial Rho GTPase 1 from Caenorhabditis elegans.